The chain runs to 108 residues: Large ribosomal subunit protein P1 (108 aa).

A disordered region spans residues 67–108 (PAAAPAEAGGEEKKEEEKKEEEEKEEEVSEEEALAGLSALFG). Residues 84-99 (KKEEEEKEEEVSEEEA) show a composition bias toward acidic residues.

This sequence belongs to the eukaryotic ribosomal protein P1/P2 family. As to quaternary structure, part of the 50S ribosomal subunit. Homodimer, it forms part of the ribosomal stalk which helps the ribosome interact with GTP-bound translation factors. Forms a heptameric uL10/P0(P1)2(P1)2(P1)2 complex, where uL10/P0 forms an elongated spine to which the P1 dimers bind in a sequential fashion.

Forms part of the ribosomal stalk, playing a central role in the interaction of the ribosome with GTP-bound translation factors. The stalk complex of P.horikoshii binds to E.coli large subunits and confers on them the ability to interact with eukaryotic elongation factors. Each succesive P1 dimer bound along the P0 spine increases the GTPase activity of elongation factors and increases translation by reconsituted ribosomes. In Pyrococcus horikoshii (strain ATCC 700860 / DSM 12428 / JCM 9974 / NBRC 100139 / OT-3), this protein is Large ribosomal subunit protein P1.